The following is a 370-amino-acid chain: Ubiquitin carboxyl-terminal hydrolase 12-B (370 aa).

The 331-residue stretch at 39 to 369 (FGLVNFGNTC…SGYILFYQSR (331 aa)) folds into the USP domain. The Nucleophile role is filled by Cys48. A disordered region spans residues 145–168 (KQEKQNGRIPNGNIDNENNNNTPD). Residues 155 to 165 (NGNIDNENNNN) show a composition bias toward low complexity. Zn(2+) contacts are provided by Cys186, Cys189, Cys233, and Cys236. The Proton acceptor role is filled by His317.

The protein belongs to the peptidase C19 family. USP12/USP46 subfamily. Interacts with WDR48.

It carries out the reaction Thiol-dependent hydrolysis of ester, thioester, amide, peptide and isopeptide bonds formed by the C-terminal Gly of ubiquitin (a 76-residue protein attached to proteins as an intracellular targeting signal).. Its function is as follows. Deubiquitinating enzyme. Has almost no deubiquitinating activity by itself and requires the interaction with wdr48 to have a high activity. The chain is Ubiquitin carboxyl-terminal hydrolase 12-B (usp12-b) from Xenopus laevis (African clawed frog).